The following is a 291-amino-acid chain: 33 kDa chaperonin (291 aa).

Cystine bridges form between Cys-236–Cys-238 and Cys-269–Cys-272.

Belongs to the HSP33 family. Post-translationally, under oxidizing conditions two disulfide bonds are formed involving the reactive cysteines. Under reducing conditions zinc is bound to the reactive cysteines and the protein is inactive.

It localises to the cytoplasm. Its function is as follows. Redox regulated molecular chaperone. Protects both thermally unfolding and oxidatively damaged proteins from irreversible aggregation. Plays an important role in the bacterial defense system toward oxidative stress. The protein is 33 kDa chaperonin of Lactobacillus johnsonii (strain CNCM I-12250 / La1 / NCC 533).